A 624-amino-acid polypeptide reads, in one-letter code: Bifunctional 3'-phosphoadenosine 5'-phosphosulfate synthase 1 (624 aa).

At M1 the chain carries N-acetylmethionine. Residues 1–225 form an adenylyl-sulfate kinase region; sequence MEIPGSLCKK…VVELLQERDI (225 aa). K12 carries the post-translational modification N6-acetyllysine. 62 to 67 provides a ligand contact to ATP; that stretch reads GAGKTT. Adenosine 5'-phosphosulfate-binding positions include 89–92, F101, 106–109, 132–133, K171, and 184–185; these read DNIR, REEN, IS, and GF. Residues C207, C212, 419–422, 521–525, and A563 each bind ATP; these read QLRN and GRDPA. The interval 234–624 is sulfate adenylyltransferase; the sequence is VKELYVPENK…TEYYKSLEKA (391 aa).

It in the N-terminal section; belongs to the APS kinase family. The protein in the C-terminal section; belongs to the sulfate adenylyltransferase family. As to quaternary structure, homodimer. In terms of tissue distribution, expressed in testis, pancreas, kidney, thymus, prostate, ovary, small intestine, colon, leukocytes and liver. Also expressed in high endothelial venules (HEV) cells and in cartilage.

The catalysed reaction is sulfate + ATP + H(+) = adenosine 5'-phosphosulfate + diphosphate. It catalyses the reaction adenosine 5'-phosphosulfate + ATP = 3'-phosphoadenylyl sulfate + ADP + H(+). It functions in the pathway sulfur metabolism; sulfate assimilation. Inhibited by chlorate. The kinase activity is subject to inhibition by the substrate adenylyl sulfate. In terms of biological role, bifunctional enzyme with both ATP sulfurylase and APS kinase activity, which mediates two steps in the sulfate activation pathway. The first step is the transfer of a sulfate group to ATP to yield adenosine 5'-phosphosulfate (APS), and the second step is the transfer of a phosphate group from ATP to APS yielding 3'-phosphoadenylylsulfate (PAPS: activated sulfate donor used by sulfotransferase). In mammals, PAPS is the sole source of sulfate; APS appears to be only an intermediate in the sulfate-activation pathway. Required for normal biosynthesis of sulfated L-selectin ligands in endothelial cells. This Homo sapiens (Human) protein is Bifunctional 3'-phosphoadenosine 5'-phosphosulfate synthase 1 (PAPSS1).